A 147-amino-acid chain; its full sequence is UPF0306 protein YhbP (147 aa).

Belongs to the UPF0306 family.

This is UPF0306 protein YhbP from Escherichia coli O8 (strain IAI1).